Here is a 648-residue protein sequence, read N- to C-terminus: Macrolide export ATP-binding/permease protein MacB (648 aa).

Residues 5–243 (LELKDIRRSY…TGGTEPVVNT (239 aa)) form the ABC transporter domain. 41-48 (GASGSGKS) provides a ligand contact to ATP. 4 helical membrane-spanning segments follow: residues 273 to 293 (LLTM…VVVG), 523 to 543 (LFLT…VMNI), 576 to 596 (AVLV…LIAF), and 611 to 631 (PLAL…FGWL).

It belongs to the ABC transporter superfamily. Macrolide exporter (TC 3.A.1.122) family. Homodimer. Part of the tripartite efflux system MacAB-TolC, which is composed of an inner membrane transporter, MacB, a periplasmic membrane fusion protein, MacA, and an outer membrane component, TolC. The complex forms a large protein conduit and can translocate molecules across both the inner and outer membranes. Interacts with MacA.

The protein resides in the cell inner membrane. Its function is as follows. Part of the tripartite efflux system MacAB-TolC. MacB is a non-canonical ABC transporter that contains transmembrane domains (TMD), which form a pore in the inner membrane, and an ATP-binding domain (NBD), which is responsible for energy generation. Confers resistance against macrolides. The polypeptide is Macrolide export ATP-binding/permease protein MacB (Escherichia coli O6:K15:H31 (strain 536 / UPEC)).